The following is a 120-amino-acid chain: Large ribosomal subunit protein uL22 (120 aa).

The protein belongs to the universal ribosomal protein uL22 family. Part of the 50S ribosomal subunit.

Its function is as follows. This protein binds specifically to 23S rRNA; its binding is stimulated by other ribosomal proteins, e.g. L4, L17, and L20. It is important during the early stages of 50S assembly. It makes multiple contacts with different domains of the 23S rRNA in the assembled 50S subunit and ribosome. In terms of biological role, the globular domain of the protein is located near the polypeptide exit tunnel on the outside of the subunit, while an extended beta-hairpin is found that lines the wall of the exit tunnel in the center of the 70S ribosome. The polypeptide is Large ribosomal subunit protein uL22 (Oenococcus oeni (strain ATCC BAA-331 / PSU-1)).